The following is a 408-amino-acid chain: MISKKTLITRDNFDKLILPIYNPIPFIPIKGKGSRIWDQKGKEYIDFSGGIAVTSLGHCHPILNKTLKNQSKMLWHLSNIFTNEPALRLAKKLLSSSFASRIFFANSGAEANEAAFKLARYYSSKIYNFKKNKIISFYNSFHGRTFFTVSVGGQSKYSNNFGPKPAGIVHASFNDINSVKNLIDHDTCAVVVELIQGEGGVIPANLTFVQALKELCKQYNVLLIFDEIQTGIGRTGKLFYYEYYAITPDILTIAKSLGGGFPISAMLTTNEVASVIAPGIHGTTYGGNPLACAVAESVIDIINTKKVLSGVEKKSKKIISELNIINKRFKLFTEIRGRGLLIGIVLKPNVSRNIHKILNFSLSEGVIFLTAGNNVIRLAPSLIIKELDIIEGMKRFYRALEKYLSRKE.

Pyridoxal 5'-phosphate-binding positions include 108 to 109 (GA) and F141. R144 is a binding site for N(2)-acetyl-L-ornithine. 226–229 (DEIQ) serves as a coordination point for pyridoxal 5'-phosphate. An N6-(pyridoxal phosphate)lysine modification is found at K255. N(2)-acetyl-L-ornithine is bound at residue T283. Residue T284 participates in pyridoxal 5'-phosphate binding.

It belongs to the class-III pyridoxal-phosphate-dependent aminotransferase family. ArgD subfamily. In terms of assembly, homodimer. The cofactor is pyridoxal 5'-phosphate.

It localises to the cytoplasm. It catalyses the reaction N(2)-acetyl-L-ornithine + 2-oxoglutarate = N-acetyl-L-glutamate 5-semialdehyde + L-glutamate. The enzyme catalyses N-succinyl-(2S,6S)-2,6-diaminopimelate + 2-oxoglutarate = (S)-2-succinylamino-6-oxoheptanedioate + L-glutamate. It functions in the pathway amino-acid biosynthesis; L-arginine biosynthesis; N(2)-acetyl-L-ornithine from L-glutamate: step 4/4. Its pathway is amino-acid biosynthesis; L-lysine biosynthesis via DAP pathway; LL-2,6-diaminopimelate from (S)-tetrahydrodipicolinate (succinylase route): step 2/3. In terms of biological role, involved in both the arginine and lysine biosynthetic pathways. This is Acetylornithine/succinyldiaminopimelate aminotransferase from Buchnera aphidicola subsp. Acyrthosiphon pisum (strain APS) (Acyrthosiphon pisum symbiotic bacterium).